A 514-amino-acid chain; its full sequence is Contact site A protein (514 aa).

A signal peptide spans 1-19 (MKFLLVLIILYNILNSAHS). The interval 20–453 (APTITAVSNG…EATTSTTYTI (434 aa)) is globular. One can recognise an IPT/TIG 1 domain in the interval 21-104 (PTITAVSNGK…TGGNGLFKYT (84 aa)). N-linked (GlcNAc...) asparagine glycans are attached at residues asparagine 128, asparagine 137, asparagine 207, asparagine 294, and asparagine 399. In terms of domain architecture, IPT/TIG 2 spans 191-283 (PTITSITPLA…NQQPITFTYN (93 aa)). 2 stretches are compositionally biased toward low complexity: residues 446 to 475 (TTSTTYTIPDTPTPTDTATPSPTPTETATP) and 483 to 494 (STPEETEAPSSA). Positions 446-494 (TTSTTYTIPDTPTPTDTATPSPTPTETATPSPTPKPTSTPEETEAPSSA) are disordered. 2 consecutive repeat copies span residues 462 to 469 (TATPSPTP) and 472 to 479 (TATPSPTP). The tract at residues 462 to 479 (TATPSPTPTETATPSPTP) is 2 X 8 AA repeats, Pro-rich. The GPI-like-anchor amidated serine moiety is linked to residue serine 492. Residues 493–514 (SATTLISPLSLIVIFISFVLLI) constitute a propeptide, removed in mature form.

In terms of processing, phosphorylated on serine and N-glycosylated with two types of oligosaccharide chains. The GPI-like-anchor contains a phosphoceramide group, rather than a phosphatidyl group.

The protein resides in the cell membrane. Functionally, this cell-surface glycoprotein mediates cell-cell binding via homophilic interaction. The polypeptide is Contact site A protein (csaA) (Dictyostelium discoideum (Social amoeba)).